The primary structure comprises 138 residues: Proofreading thioesterase EntH (138 aa).

The Nucleophile or proton acceptor role is filled by E64.

It belongs to the thioesterase PaaI family. Homotetramer. Dimer of dimers. Interacts specifically with the aryl carrier protein (ArCP) domain of EntB.

The protein localises to the cytoplasm. It functions in the pathway siderophore biosynthesis; enterobactin biosynthesis. Functionally, required for optimal enterobactin synthesis. Acts as a proofreading enzyme that prevents EntB misacylation by hydrolyzing the thioester bound existing between EntB and wrongly charged molecules. The polypeptide is Proofreading thioesterase EntH (Salmonella arizonae (strain ATCC BAA-731 / CDC346-86 / RSK2980)).